The sequence spans 118 residues: Small ribosomal subunit protein uS13 (118 aa).

The disordered stretch occupies residues 92-118 (RKGLPVRGQRTKTNARTRKGPRKPIRK).

Belongs to the universal ribosomal protein uS13 family. In terms of assembly, part of the 30S ribosomal subunit. Forms a loose heterodimer with protein S19. Forms two bridges to the 50S subunit in the 70S ribosome.

In terms of biological role, located at the top of the head of the 30S subunit, it contacts several helices of the 16S rRNA. In the 70S ribosome it contacts the 23S rRNA (bridge B1a) and protein L5 of the 50S subunit (bridge B1b), connecting the 2 subunits; these bridges are implicated in subunit movement. Contacts the tRNAs in the A and P-sites. This chain is Small ribosomal subunit protein uS13, found in Pseudomonas putida (strain W619).